Reading from the N-terminus, the 187-residue chain is UPF0301 protein Noc_0368 (187 aa).

The protein belongs to the UPF0301 (AlgH) family.

In Nitrosococcus oceani (strain ATCC 19707 / BCRC 17464 / JCM 30415 / NCIMB 11848 / C-107), this protein is UPF0301 protein Noc_0368.